A 390-amino-acid polypeptide reads, in one-letter code: NADH-quinone oxidoreductase subunit D (390 aa).

The protein belongs to the complex I 49 kDa subunit family. In terms of assembly, NDH-1 is composed of 14 different subunits. Subunits NuoB, C, D, E, F, and G constitute the peripheral sector of the complex.

The protein resides in the cell membrane. The catalysed reaction is a quinone + NADH + 5 H(+)(in) = a quinol + NAD(+) + 4 H(+)(out). Its function is as follows. NDH-1 shuttles electrons from NADH, via FMN and iron-sulfur (Fe-S) centers, to quinones in the respiratory chain. The immediate electron acceptor for the enzyme in this species is believed to be ubiquinone. Couples the redox reaction to proton translocation (for every two electrons transferred, four hydrogen ions are translocated across the cytoplasmic membrane), and thus conserves the redox energy in a proton gradient. The chain is NADH-quinone oxidoreductase subunit D from Wolbachia pipientis subsp. Culex pipiens (strain wPip).